The following is a 509-amino-acid chain: Phosphoenolpyruvate carboxylase (509 aa).

Belongs to the PEPCase type 2 family. Homotetramer. The cofactor is Mg(2+).

The catalysed reaction is oxaloacetate + phosphate = phosphoenolpyruvate + hydrogencarbonate. Its function is as follows. Catalyzes the irreversible beta-carboxylation of phosphoenolpyruvate (PEP) to form oxaloacetate (OAA), a four-carbon dicarboxylic acid source for the tricarboxylic acid cycle. The polypeptide is Phosphoenolpyruvate carboxylase (Metallosphaera sedula (strain ATCC 51363 / DSM 5348 / JCM 9185 / NBRC 15509 / TH2)).